Reading from the N-terminus, the 518-residue chain is Probable cytochrome P450 9h1 (518 aa).

Cys462 serves as a coordination point for heme.

It belongs to the cytochrome P450 family. Requires heme as cofactor.

The protein localises to the endoplasmic reticulum membrane. It is found in the microsome membrane. Functionally, may be involved in the metabolism of insect hormones and in the breakdown of synthetic insecticides. The polypeptide is Probable cytochrome P450 9h1 (Cyp9h1) (Drosophila melanogaster (Fruit fly)).